The sequence spans 405 residues: Cytochrome b (405 aa).

Residues 44-64 (FGSLAGIAMIIMIATGIFLAM) form a helical membrane-spanning segment. Residues histidine 94 and histidine 108 each contribute to the heme b site. A run of 8 helical transmembrane segments spans residues 97–117 (GASM…YYGS), 124–144 (VLWW…FMGY), 163–183 (FSAI…GFSV), 191–211 (FFSL…LHMW), 245–265 (FGLG…PNFF), 303–323 (LGGV…PWLD), 338–358 (GFFW…AMPA), and 368–388 (LATI…GWFE). The heme b site is built by histidine 195 and histidine 209.

This sequence belongs to the cytochrome b family. The main subunits of complex b-c1 are: cytochrome b, cytochrome c1 and the Rieske protein. It depends on heme b as a cofactor.

It is found in the cell membrane. Component of the ubiquinol-cytochrome c reductase complex (complex III or cytochrome b-c1 complex), which is a respiratory chain that generates an electrochemical potential coupled to ATP synthesis. The protein is Cytochrome b (petB) of Rhodospirillum rubrum.